Consider the following 796-residue polypeptide: Inactive dipeptidyl peptidase 10 (796 aa).

At 1–34 the chain is on the cytoplasmic side; that stretch reads MNQTASVSHHIKCQPSKTIKELGSNSPPQRNWKG. A mediates effects on KCND2 region spans residues 1–55; it reads MNQTASVSHHIKCQPSKTIKELGSNSPPQRNWKGIAIALLVILVVCSLITMSVIL. Residues 35–55 form a helical; Signal-anchor for type II membrane protein membrane-spanning segment; sequence IAIALLVILVVCSLITMSVIL. Residues 56–796 lie on the Extracellular side of the membrane; sequence LTPDELTNSS…VLPQEPEEDE (741 aa). Asn-63, Asn-90, Asn-111, and Asn-119 each carry an N-linked (GlcNAc...) asparagine glycan. Tyr-138 and Tyr-143 each carry phosphotyrosine. Asn-257, Asn-342, and Asn-748 each carry an N-linked (GlcNAc...) asparagine glycan.

This sequence belongs to the peptidase S9B family. DPPIV subfamily. In terms of assembly, may form oligomers. Interacts with KCND1. Interacts with KCND2. Identified in a complex with KCND2 and KCNIP3. Post-translationally, N-glycosylation is important for cell surface expression, specially at Asn-257, which is crucial. Detected in brain cortex, hippocampus, thalamus and cerebellum Purkinje cells (at protein level).

The protein localises to the cell membrane. Functionally, promotes cell surface expression of the potassium channel KCND2. Modulates the activity and gating characteristics of the potassium channel KCND2. Has no dipeptidyl aminopeptidase activity. The protein is Inactive dipeptidyl peptidase 10 (Dpp10) of Rattus norvegicus (Rat).